Consider the following 463-residue polypeptide: FAD-dependent monooxygenase str9 (463 aa).

3 residues coordinate FAD: Glu-37, Gly-50, and Arg-114. Arg-200 is a catalytic residue. Residue Asp-334 participates in FAD binding.

This sequence belongs to the paxM FAD-dependent monooxygenase family.

It participates in mycotoxin biosynthesis. In terms of biological role, FAD-dependent monooxygenase; part of the gene cluster that mediates the biosynthesis of strobilurin A, an antifungal polyketide that contains a key beta-methoxyacrylate toxophore that targets the complex III of the mitochondrial electron transport chain. Strobilurin biosynthesis begins with construction of benzoyl CoA by step-wise elimination of ammonia from phenylalanine by the phenylalanine ammonia-lyase str11, oxygenation by str8 and retro-Claisen reaction to form benzoic acid, which is activated to its CoA thiolester benzoyl CoA by the dedicated CoA ligase str10. Benzoyl CoA forms the starter unit for the highly reducing polyketide synthase stpks1 that produces the polyketide prestrobilutin A. The FAD-dependent oxygenase str9 then catalyzes the key oxidative rearrangement responsible for the creation of the beta-methoxyacrylate toxophore. Str9 performs epoxidation of the 2,3 olefin of prestrobilutin A, followed by Meinwald rearrangement to furnish the aldehyde intermediate. Rapid enolization of the aldehyde intermediate would give the beta-methoxyacrylate skeleton and methylations catalyzed by str2 and str3 complete the synthesis and lead to the production of strobilurin A. The short-chain dehydrogenase stl2 and the dehydrogenase str4 play a role in the shunt pathway leading to the production of bolineol. The cluster encodes no obvious halogenase gene that could be involved in production of strobilurin B, nor any obvious dimethylallyl-transferase that could be involved in the production of strobilurin G. It is possible that unknown proteins encoded in, or near, the cluster (such as str1 or stl1) may form new classes of halogenases or dimethylally-transferases, or that the responsible genes are located elsewhere on the genome. Similarly, proteins encoded by str5/str6 hydrolases appear to have no chemical role in the biosynthesis of strobilurin A. Finally, no obvious self-resistance gene is found within the cluster. The protein is FAD-dependent monooxygenase str9 of Strobilurus tenacellus.